The following is a 209-amino-acid chain: Protein GET1 (209 aa).

Over 1-3 the chain is Lumenal; that stretch reads MSL. A helical membrane pass occupies residues 4 to 23; the sequence is LLVIFLLELVVQLVNTIGAK. Over 24-110 the chain is Cytoplasmic; that stretch reads TINNLLWRFY…SFSRKLTIYR (87 aa). Positions 74–101 form a coiled coil; sequence WARLQRKHDKLMDELEKKKSQLDAHRTS. The chain crosses the membrane as a helical span at residues 111 to 131; sequence WILTRGMQWFLCFWFSSQPMF. The Lumenal segment spans residues 132-155; sequence WLPYGWFPYWVEWLVSFPNAPMGS. The helical transmembrane segment at 156–172 threads the bilayer; that stretch reads VSIVVWQSACSGVLALV. Over 173 to 209 the chain is Cytoplasmic; sequence IEAVMAVVRYTGGTGMQKQRQPVPAAGGAPGTSKKDL. Residues 188-209 form a disordered region; the sequence is MQKQRQPVPAAGGAPGTSKKDL.

It belongs to the WRB/GET1 family. Interacts with GET3.

It localises to the endoplasmic reticulum membrane. In terms of biological role, required for the post-translational delivery of tail-anchored (TA) proteins to the endoplasmic reticulum. Acts as a membrane receptor for soluble GET3, which recognizes and selectively binds the transmembrane domain of TA proteins in the cytosol. This Chaetomium thermophilum (strain DSM 1495 / CBS 144.50 / IMI 039719) (Thermochaetoides thermophila) protein is Protein GET1.